Consider the following 320-residue polypeptide: Olfactory receptor 12D1 (320 aa).

Residues 1-23 are Extracellular-facing; the sequence is MLNTTSVTEFLLLGVTDIQELQP. Asn3 carries an N-linked (GlcNAc...) asparagine glycan. Residues 24-44 form a helical membrane-spanning segment; it reads FLFVVFLTIYFISVAGNGAIL. The Cytoplasmic segment spans residues 45–55; it reads MIVISDPRLHS. Residues 56-76 form a helical membrane-spanning segment; the sequence is PMYFFLGNLSCLDICYSSVTL. Topologically, residues 77-97 are extracellular; it reads PKMLQNFLSAHKAISFLGCIS. Cysteines 95 and 177 form a disulfide. The chain crosses the membrane as a helical span at residues 98–118; sequence QLHFFHFLGSTEAMLLAVMAF. Residues 119 to 141 are Cytoplasmic-facing; that stretch reads DRFVAICKPLRYTVIMNPQLCTQ. The helical transmembrane segment at 142–162 threads the bilayer; that stretch reads MAITIWMIGFFHALLHSLMTS. Residues 163–203 lie on the Extracellular side of the membrane; the sequence is RLNFCGSNRIYHFFCDVKPLLKLACGNTELNQWLLSTVTGT. A helical membrane pass occupies residues 204 to 224; the sequence is IAMGPFFLTLLSYFYIITHLF. The Cytoplasmic segment spans residues 225–238; sequence FKTHSFSMLRKALS. The chain crosses the membrane as a helical span at residues 239–259; it reads TCASHFMVVILLYAPVLFTYI. The Extracellular segment spans residues 260–270; sequence HHASGTSMDQD. A helical transmembrane segment spans residues 271 to 291; the sequence is RITAIMYTVVTPVLNPLIYTL. Residues 292–320 are Cytoplasmic-facing; that stretch reads RNKEVKGAFNRAMKRWLWPKEILKNSSEA.

The protein belongs to the G-protein coupled receptor 1 family.

The protein localises to the cell membrane. Its function is as follows. Odorant receptor. This Homo sapiens (Human) protein is Olfactory receptor 12D1 (OR12D1).